Here is a 180-residue protein sequence, read N- to C-terminus: Inner membrane-spanning protein YciB (180 aa).

5 consecutive transmembrane segments (helical) span residues 25–45 (QNAT…CYVI), 49–69 (VSKL…ITLI), 76–96 (IKIK…MSGI), 118–138 (IILS…NEIV), and 150–170 (FKVF…LPLL).

The protein belongs to the YciB family.

The protein localises to the cell inner membrane. In terms of biological role, plays a role in cell envelope biogenesis, maintenance of cell envelope integrity and membrane homeostasis. In Rickettsia felis (strain ATCC VR-1525 / URRWXCal2) (Rickettsia azadi), this protein is Inner membrane-spanning protein YciB.